A 311-amino-acid polypeptide reads, in one-letter code: Ribonuclease HIII (311 aa).

The RNase H type-2 domain maps to 95 to 311 (MSIVGSDEVG…NTEKALRLLR (217 aa)). A divalent metal cation is bound by residues aspartate 101, glutamate 102, and aspartate 206.

It belongs to the RNase HII family. RnhC subfamily. Mn(2+) serves as cofactor. The cofactor is Mg(2+).

Its subcellular location is the cytoplasm. It carries out the reaction Endonucleolytic cleavage to 5'-phosphomonoester.. Functionally, endonuclease that specifically degrades the RNA of RNA-DNA hybrids. This Bacillus cereus (strain ATCC 14579 / DSM 31 / CCUG 7414 / JCM 2152 / NBRC 15305 / NCIMB 9373 / NCTC 2599 / NRRL B-3711) protein is Ribonuclease HIII.